The chain runs to 400 residues: Argininosuccinate synthase (400 aa).

8 to 16 provides a ligand contact to ATP; it reads AYSGGLDTS. Y87 serves as a coordination point for L-citrulline. G117 lines the ATP pocket. 3 residues coordinate L-aspartate: T119, N123, and D124. N123 contributes to the L-citrulline binding site. L-citrulline contacts are provided by R127, S175, E260, and Y272.

The protein belongs to the argininosuccinate synthase family. Type 1 subfamily. Homotetramer.

The protein localises to the cytoplasm. It catalyses the reaction L-citrulline + L-aspartate + ATP = 2-(N(omega)-L-arginino)succinate + AMP + diphosphate + H(+). The protein operates within amino-acid biosynthesis; L-arginine biosynthesis; L-arginine from L-ornithine and carbamoyl phosphate: step 2/3. This is Argininosuccinate synthase from Mycolicibacterium gilvum (strain PYR-GCK) (Mycobacterium gilvum (strain PYR-GCK)).